Reading from the N-terminus, the 147-residue chain is Methylglyoxal synthase (147 aa).

The 144-residue stretch at 4 to 147 (VSVPATKRIA…LLNFELLCES (144 aa)) folds into the MGS-like domain. Residues histidine 17, lysine 21, 43–46 (TGTT), and 63–64 (SG) contribute to the substrate site. Catalysis depends on aspartate 69, which acts as the Proton donor/acceptor. Histidine 96 is a substrate binding site.

This sequence belongs to the methylglyoxal synthase family.

The catalysed reaction is dihydroxyacetone phosphate = methylglyoxal + phosphate. In terms of biological role, catalyzes the formation of methylglyoxal from dihydroxyacetone phosphate. The sequence is that of Methylglyoxal synthase from Leptospira borgpetersenii serovar Hardjo-bovis (strain JB197).